A 1151-amino-acid chain; its full sequence is Ankyrin and IPT/TIG repeat-containing protein C26H5.05 (1151 aa).

Disordered regions lie at residues 77 to 104 (NLPS…AECL), 452 to 511 (KSRN…ENSR), and 516 to 535 (QLSA…KSVE). Residues 87–98 (SHASSPNLSNSQ) are compositionally biased toward polar residues. Positions 452–463 (KSRNLTKSEKTG) are enriched in basic and acidic residues. Composition is skewed to polar residues over residues 464-496 (KSNS…SDNP) and 517-532 (LSAS…STLK). In terms of domain architecture, IPT/TIG spans 658-739 (PLISRIIPNK…SSEAPVMFTY (82 aa)). 2 ANK repeats span residues 861–890 (SGRS…DVNK) and 894–923 (LGYT…KPDV). The disordered stretch occupies residues 1041-1067 (PPPYSEFADDTTAQAGSSKRDSAISED). Over residues 1058 to 1067 (SKRDSAISED) the composition is skewed to basic and acidic residues. Residues 1113 to 1133 (MDFMLFSFWLPALLLLSIFGL) traverse the membrane as a helical segment.

It localises to the vacuole membrane. In Schizosaccharomyces pombe (strain 972 / ATCC 24843) (Fission yeast), this protein is Ankyrin and IPT/TIG repeat-containing protein C26H5.05.